Consider the following 441-residue polypeptide: Xaa-Pro dipeptidase (441 aa).

Positions 244, 255, 336, 381, and 420 each coordinate Mn(2+).

The protein belongs to the peptidase M24B family. Bacterial-type prolidase subfamily. Mn(2+) serves as cofactor.

It carries out the reaction Xaa-L-Pro dipeptide + H2O = an L-alpha-amino acid + L-proline. In terms of biological role, splits dipeptides with a prolyl residue in the C-terminal position. The chain is Xaa-Pro dipeptidase from Xanthomonas axonopodis pv. citri (strain 306).